The chain runs to 100 residues: MARKSLIQRDKKRKKLELKYHWIRGSLKKEIHKVPLLSDKWEIYVKLQSLPRNSAPTRLHRRCFLTGRPRANYRDFGLSGHRLREMVQACLLPGATRSSW.

Belongs to the universal ribosomal protein uS14 family. In terms of assembly, part of the 30S ribosomal subunit.

It localises to the plastid. Functionally, binds 16S rRNA, required for the assembly of 30S particles. The chain is Small ribosomal subunit protein uS14c (rps14) from Cuscuta reflexa (Southern Asian dodder).